The chain runs to 292 residues: Ribosomal RNA small subunit methyltransferase A (292 aa).

The S-adenosyl-L-methionine site is built by N28, L30, G55, E76, D101, and N126.

This sequence belongs to the class I-like SAM-binding methyltransferase superfamily. rRNA adenine N(6)-methyltransferase family. RsmA subfamily.

It localises to the cytoplasm. It carries out the reaction adenosine(1518)/adenosine(1519) in 16S rRNA + 4 S-adenosyl-L-methionine = N(6)-dimethyladenosine(1518)/N(6)-dimethyladenosine(1519) in 16S rRNA + 4 S-adenosyl-L-homocysteine + 4 H(+). Specifically dimethylates two adjacent adenosines (A1518 and A1519) in the loop of a conserved hairpin near the 3'-end of 16S rRNA in the 30S particle. May play a critical role in biogenesis of 30S subunits. This is Ribosomal RNA small subunit methyltransferase A from Bacillus cereus (strain G9842).